We begin with the raw amino-acid sequence, 377 residues long: Nucleosome assembly protein 1;2 (377 aa).

Residues 26-80 (VNVLKNKLHDLTGKHSNVTESLSPNVRKRVEALREIQTEHDELEAKFFEERAALE) adopt a coiled-coil conformation. Positions 47 to 62 (LSPNVRKRVEALREIQ) match the Nuclear export signal motif. The Nuclear localization signal motif lies at 223 to 228 (KKKPKK). A disordered region spans residues 298–377 (EAAEDDYAEL…GERPPECKQQ (80 aa)). A compositionally biased stretch (acidic residues) spans 299 to 342 (AAEDDYAELEDDEDEDDDEEDDEDEDEEEEDEEDDEDEEEDEDE). Cys374 is subject to Cysteine methyl ester. A lipid anchor (S-farnesyl cysteine) is attached at Cys374. Residues 375 to 377 (KQQ) constitute a propeptide, removed in mature form.

It belongs to the nucleosome assembly protein (NAP) family. As to quaternary structure, binds preferentially histone H1 in vitro. Interacts with CYCB1;1.

It localises to the nucleus. It is found in the cytoplasm. Its function is as follows. May modulate chromatin structure by regulation of nucleosome assembly/disassembly. Could function together with B-type cyclins in the regulation of microtubule dynamics. The chain is Nucleosome assembly protein 1;2 (NAP1;2) from Nicotiana tabacum (Common tobacco).